We begin with the raw amino-acid sequence, 333 residues long: Probable HTH-type transcriptional repressor ExuR (333 aa).

The region spanning 2–56 (VTIKDIAKLANVSHTTVSRALNNSPYIKEHTKKKILELAEQLNYTPNVNAKSLAM) is the HTH lacI-type domain. Positions 4–23 (IKDIAKLANVSHTTVSRALN) form a DNA-binding region, H-T-H motif.

Transcriptional repressor for the exu locus which is required for galacturonate utilization. This chain is Probable HTH-type transcriptional repressor ExuR (exuR), found in Bacillus subtilis (strain 168).